The chain runs to 228 residues: Probable septum site-determining protein MinC (228 aa).

It belongs to the MinC family. As to quaternary structure, interacts with MinD and FtsZ.

Cell division inhibitor that blocks the formation of polar Z ring septums. Rapidly oscillates between the poles of the cell to destabilize FtsZ filaments that have formed before they mature into polar Z rings. Prevents FtsZ polymerization. The protein is Probable septum site-determining protein MinC of Yersinia enterocolitica serotype O:8 / biotype 1B (strain NCTC 13174 / 8081).